The following is a 412-amino-acid chain: Poly-beta-1,6-N-acetyl-D-glucosamine synthase (412 aa).

The next 4 helical transmembrane spans lie at 7 to 28 (LLFY…YFFI), 298 to 320 (IASI…TANI), 332 to 354 (IFFF…ALFI), and 364 to 386 (VGLI…VVIM).

It belongs to the glycosyltransferase 2 family.

It is found in the cell membrane. In terms of biological role, N-acetylglucosaminyltransferase that catalyzes the polymerization of single monomer units of UDP-N-acetylglucosamine to produce the linear homomer poly-beta-1,6-N-acetyl-D-glucosamine (PNAG, also referred to as PIA), a biofilm adhesin polysaccharide. Requires IcaD for full activity. This chain is Poly-beta-1,6-N-acetyl-D-glucosamine synthase (icaA), found in Staphylococcus epidermidis (strain ATCC 35984 / DSM 28319 / BCRC 17069 / CCUG 31568 / BM 3577 / RP62A).